The following is a 102-amino-acid chain: Large ribosomal subunit protein bL21 (102 aa).

The protein belongs to the bacterial ribosomal protein bL21 family. Part of the 50S ribosomal subunit. Contacts protein L20.

Functionally, this protein binds to 23S rRNA in the presence of protein L20. This chain is Large ribosomal subunit protein bL21, found in Geobacillus thermodenitrificans (strain NG80-2).